The chain runs to 252 residues: Ribonuclease 3 (252 aa).

Residues 3-125 (LATLETRLDH…IFGAAFLDGG (123 aa)) form the RNase III domain. Residue Glu38 coordinates Mg(2+). Asp42 is an active-site residue. 2 residues coordinate Mg(2+): Asp111 and Glu114. The active site involves Glu114. In terms of domain architecture, DRBM spans 152–222 (DAKTLLQEFL…AKLALEAAQA (71 aa)).

It belongs to the ribonuclease III family. As to quaternary structure, homodimer. It depends on Mg(2+) as a cofactor.

Its subcellular location is the cytoplasm. It catalyses the reaction Endonucleolytic cleavage to 5'-phosphomonoester.. In terms of biological role, digests double-stranded RNA. Involved in the processing of primary rRNA transcript to yield the immediate precursors to the large and small rRNAs (23S and 16S). Processes some mRNAs, and tRNAs when they are encoded in the rRNA operon. Processes pre-crRNA and tracrRNA of type II CRISPR loci if present in the organism. The protein is Ribonuclease 3 of Bordetella petrii (strain ATCC BAA-461 / DSM 12804 / CCUG 43448).